The chain runs to 456 residues: Imidazolonepropionase (456 aa).

2 residues coordinate Fe(3+): histidine 104 and histidine 106. 2 residues coordinate Zn(2+): histidine 104 and histidine 106. 4-imidazolone-5-propanoate-binding residues include arginine 113, tyrosine 176, and histidine 209. N-formimidoyl-L-glutamate is bound at residue tyrosine 176. Histidine 274 lines the Fe(3+) pocket. Histidine 274 contributes to the Zn(2+) binding site. Glutamine 277 is a binding site for 4-imidazolone-5-propanoate. Position 349 (aspartate 349) interacts with Fe(3+). Residue aspartate 349 participates in Zn(2+) binding. Residues asparagine 351 and glycine 353 each coordinate N-formimidoyl-L-glutamate. Serine 354 contacts 4-imidazolone-5-propanoate.

It belongs to the metallo-dependent hydrolases superfamily. HutI family. The cofactor is Zn(2+). It depends on Fe(3+) as a cofactor.

It localises to the cytoplasm. It catalyses the reaction 4-imidazolone-5-propanoate + H2O = N-formimidoyl-L-glutamate. It functions in the pathway amino-acid degradation; L-histidine degradation into L-glutamate; N-formimidoyl-L-glutamate from L-histidine: step 3/3. Catalyzes the hydrolytic cleavage of the carbon-nitrogen bond in imidazolone-5-propanoate to yield N-formimidoyl-L-glutamate. It is the third step in the universal histidine degradation pathway. This chain is Imidazolonepropionase, found in Verminephrobacter eiseniae (strain EF01-2).